We begin with the raw amino-acid sequence, 162 residues long: UPF0114 protein Psyr_4257 (162 aa).

A run of 4 helical transmembrane segments spans residues Leu15 to Phe35, Leu53 to Val73, Val109 to Thr129, and Leu136 to Leu156.

The protein belongs to the UPF0114 family.

It is found in the cell membrane. This Pseudomonas syringae pv. syringae (strain B728a) protein is UPF0114 protein Psyr_4257.